Here is a 345-residue protein sequence, read N- to C-terminus: Phosphate acyltransferase (345 aa).

This sequence belongs to the PlsX family. In terms of assembly, homodimer. Probably interacts with PlsY.

The protein localises to the cytoplasm. It carries out the reaction a fatty acyl-[ACP] + phosphate = an acyl phosphate + holo-[ACP]. It participates in lipid metabolism; phospholipid metabolism. Functionally, catalyzes the reversible formation of acyl-phosphate (acyl-PO(4)) from acyl-[acyl-carrier-protein] (acyl-ACP). This enzyme utilizes acyl-ACP as fatty acyl donor, but not acyl-CoA. The protein is Phosphate acyltransferase of Proteus mirabilis (strain HI4320).